A 161-amino-acid polypeptide reads, in one-letter code: Dihydrofolate reductase (161 aa).

In terms of domain architecture, DHFR spans 2–157 (TLSIIVAHDK…IPHTFLHLVR (156 aa)). 6 to 8 (IVA) contributes to the substrate binding site. Residues 7–8 (VA) and 15–20 (IGYQNQ) each bind NADP(+). Asp28 provides a ligand contact to substrate. Position 44 to 47 (44 to 47 (GRKT)) interacts with NADP(+). Arg58 contributes to the substrate binding site. NADP(+)-binding positions include 63–66 (LTNQ) and 93–98 (FGGQTL). Thr112 is a binding site for substrate.

It belongs to the dihydrofolate reductase family.

The enzyme catalyses (6S)-5,6,7,8-tetrahydrofolate + NADP(+) = 7,8-dihydrofolate + NADPH + H(+). It participates in cofactor biosynthesis; tetrahydrofolate biosynthesis; 5,6,7,8-tetrahydrofolate from 7,8-dihydrofolate: step 1/1. In terms of biological role, key enzyme in folate metabolism. Catalyzes an essential reaction for de novo glycine and purine synthesis, and for DNA precursor synthesis. This Staphylococcus epidermidis protein is Dihydrofolate reductase (folA).